The sequence spans 198 residues: MLENLNLSLFSLINATPDSAPWMISLAIFIAKDLITVVPLLAVVLWLWGLTAQRQLVIKIAIALAVSLFVSWTMGHLFPHDRPFVENIGYNFLHHAADDSFPSDHGTVIFTFALAFLCWHRLWSGSLLMVLAVVIAWSRVYLGVHWPLDMLGGLLAGMIGCLSAQIIWQAMGHKLYQRLQSWYRVCFALPIRKGWVRD.

Over 1-27 (MLENLNLSLFSLINATPDSAPWMISLA) the chain is Cytoplasmic. A helical membrane pass occupies residues 28–48 (IFIAKDLITVVPLLAVVLWLW). The Periplasmic segment spans residues 49-57 (GLTAQRQLV). The helical transmembrane segment at 58 to 78 (IKIAIALAVSLFVSWTMGHLF) threads the bilayer. The Cytoplasmic portion of the chain corresponds to 79 to 120 (PHDRPFVENIGYNFLHHAADDSFPSDHGTVIFTFALAFLCWH). A helical transmembrane segment spans residues 121 to 143 (RLWSGSLLMVLAVVIAWSRVYLG). Residues 144–149 (VHWPLD) are Periplasmic-facing. Residues 150 to 172 (MLGGLLAGMIGCLSAQIIWQAMG) traverse the membrane as a helical segment. The Cytoplasmic segment spans residues 173–198 (HKLYQRLQSWYRVCFALPIRKGWVRD).

The protein belongs to the BcrC/YbjG family.

The protein resides in the cell inner membrane. The catalysed reaction is di-trans,octa-cis-undecaprenyl diphosphate + H2O = di-trans,octa-cis-undecaprenyl phosphate + phosphate + H(+). Its function is as follows. Overexpression leads to increased undecaprenyl diphosphatase activity and to increased resistance to bacitracin. May have a preferred substrate other than undecaprenyl diphosphate in vivo. The chain is Putative undecaprenyl-diphosphatase YbjG (ybjG) from Escherichia coli (strain K12).